We begin with the raw amino-acid sequence, 65 residues long: Conotoxin mr5.1b (65 aa).

The first 19 residues, 1 to 19 (MRCVPVFVILLLLIASAPS), serve as a signal peptide directing secretion. Positions 20 to 48 (VDARLKTKDDMPLPSSHANIKRTLQMLRN) are excised as a propeptide. Position 60 is a 4-carboxyglutamate (E60).

This sequence belongs to the conotoxin T superfamily. In terms of processing, contains 2 disulfide bonds that can be either 'C1-C3, C2-C4' or 'C1-C4, C2-C3', since these disulfide connectivities have been observed for conotoxins with cysteine framework V (for examples, see AC P0DQQ7 and AC P81755). In terms of tissue distribution, expressed by the venom duct.

It is found in the secreted. The protein is Conotoxin mr5.1b of Conus marmoreus (Marble cone).